The primary structure comprises 388 residues: GTPase Obg (388 aa).

The region spanning 1 to 159 (MKFVDEAVIR…RSLKLELLLL (159 aa)) is the Obg domain. An OBG-type G domain is found at 160 to 333 (ADVGLLGMPN…LALKLLDYIA (174 aa)). GTP contacts are provided by residues 166-173 (GMPNAGKS), 191-195 (FTTLV), 213-216 (DIPG), 283-286 (NKTD), and 314-316 (SAY). Mg(2+)-binding residues include Ser173 and Thr193.

Belongs to the TRAFAC class OBG-HflX-like GTPase superfamily. OBG GTPase family. Monomer. The cofactor is Mg(2+).

The protein localises to the cytoplasm. In terms of biological role, an essential GTPase which binds GTP, GDP and possibly (p)ppGpp with moderate affinity, with high nucleotide exchange rates and a fairly low GTP hydrolysis rate. Plays a role in control of the cell cycle, stress response, ribosome biogenesis and in those bacteria that undergo differentiation, in morphogenesis control. The protein is GTPase Obg of Shewanella putrefaciens (strain CN-32 / ATCC BAA-453).